The following is a 257-amino-acid chain: tRNA pseudouridine synthase A (257 aa).

Catalysis depends on Asp-53, which acts as the Nucleophile. Tyr-111 contacts substrate.

It belongs to the tRNA pseudouridine synthase TruA family. As to quaternary structure, homodimer.

It carries out the reaction uridine(38/39/40) in tRNA = pseudouridine(38/39/40) in tRNA. Functionally, formation of pseudouridine at positions 38, 39 and 40 in the anticodon stem and loop of transfer RNAs. This chain is tRNA pseudouridine synthase A, found in Xanthomonas campestris pv. campestris (strain 8004).